A 373-amino-acid polypeptide reads, in one-letter code: MRVGKLCRLALRFWMGLILVLGFSSHYYNPTRRRLVYSRILQTYDWLLMVINLGAFYLYYRYAMTYFLEGMFRRQGFVNQVSTCNVFQQLLMAVTGTWLHFLFERHVCQTYNELSRILKHDLKLKEHSRFYCLAFLAKVYNFFHNFNFALSAIMHWGLRPFNVWDLLANLYFVYNSLARDAILVAYVLLLLNLSEALRLNGQQEHDTYSDLMKQLRRRERLLRIGRRVHRMFAWLVAIALIYLVFFNTATIYLGYTMFIQKHDALGLRGRGLKMLLTVVSFLVILWDVVLLQVICEKLLAEENKICDCPEDVASSRTTYRQWEMSALRRAITRSSPENNVLGMFRMDMRCAFALISCSLSYGIIIIQIGYIPG.

The Cytoplasmic portion of the chain corresponds to 1-8; sequence MRVGKLCR. A helical transmembrane segment spans residues 9–29; the sequence is LALRFWMGLILVLGFSSHYYN. Over 30–82 the chain is Extracellular; sequence PTRRRLVYSRILQTYDWLLMVINLGAFYLYYRYAMTYFLEGMFRRQGFVNQVS. Residues 83-103 form a helical membrane-spanning segment; that stretch reads TCNVFQQLLMAVTGTWLHFLF. The Cytoplasmic segment spans residues 104-132; it reads ERHVCQTYNELSRILKHDLKLKEHSRFYC. The chain crosses the membrane as a helical span at residues 133-153; that stretch reads LAFLAKVYNFFHNFNFALSAI. At 154–170 the chain is on the extracellular side; sequence MHWGLRPFNVWDLLANL. Residues 171-191 traverse the membrane as a helical segment; that stretch reads YFVYNSLARDAILVAYVLLLL. The Cytoplasmic segment spans residues 192–230; the sequence is NLSEALRLNGQQEHDTYSDLMKQLRRRERLLRIGRRVHR. The helical transmembrane segment at 231–251 threads the bilayer; it reads MFAWLVAIALIYLVFFNTATI. The Extracellular portion of the chain corresponds to 252–273; sequence YLGYTMFIQKHDALGLRGRGLK. The chain crosses the membrane as a helical span at residues 274–294; sequence MLLTVVSFLVILWDVVLLQVI. Topologically, residues 295–350 are cytoplasmic; sequence CEKLLAEENKICDCPEDVASSRTTYRQWEMSALRRAITRSSPENNVLGMFRMDMRC. Residues 351 to 371 form a helical membrane-spanning segment; it reads AFALISCSLSYGIIIIQIGYI. The Extracellular portion of the chain corresponds to 372–373; it reads PG.

This sequence belongs to the insect chemoreceptor superfamily. Gustatory receptor (GR) family. Gr10a subfamily.

The protein localises to the cell membrane. In terms of biological role, probable gustatory receptor which mediates acceptance or avoidance behavior, depending on its substrates. The sequence is that of Putative gustatory receptor 10b (Gr10b) from Drosophila melanogaster (Fruit fly).